Here is a 92-residue protein sequence, read N- to C-terminus: Small ribosomal subunit protein uS19c (92 aa).

The protein belongs to the universal ribosomal protein uS19 family.

The protein resides in the plastid. It localises to the chloroplast. Its function is as follows. Protein S19 forms a complex with S13 that binds strongly to the 16S ribosomal RNA. This is Small ribosomal subunit protein uS19c from Cicer arietinum (Chickpea).